We begin with the raw amino-acid sequence, 448 residues long: Tubulin beta-2 chain (448 aa).

GTP is bound by residues Gln11, Glu69, Ser138, Gly142, Thr143, Gly144, Asn204, and Asn226. Glu69 provides a ligand contact to Mg(2+). A disordered region spans residues 421 to 448 (EYQQYQDATADEDGEYEDELDGQEEEDM). Residues 429-448 (TADEDGEYEDELDGQEEEDM) are compositionally biased toward acidic residues.

The protein belongs to the tubulin family. Dimer of alpha and beta chains. A typical microtubule is a hollow water-filled tube with an outer diameter of 25 nm and an inner diameter of 15 nM. Alpha-beta heterodimers associate head-to-tail to form protofilaments running lengthwise along the microtubule wall with the beta-tubulin subunit facing the microtubule plus end conferring a structural polarity. Microtubules usually have 13 protofilaments but different protofilament numbers can be found in some organisms and specialized cells. It depends on Mg(2+) as a cofactor.

It localises to the cytoplasm. It is found in the cytoskeleton. Functionally, tubulin is the major constituent of microtubules, a cylinder consisting of laterally associated linear protofilaments composed of alpha- and beta-tubulin heterodimers. Microtubules grow by the addition of GTP-tubulin dimers to the microtubule end, where a stabilizing cap forms. Below the cap, tubulin dimers are in GDP-bound state, owing to GTPase activity of alpha-tubulin. This Eleusine indica (Goosegrass) protein is Tubulin beta-2 chain (TUBB2).